Here is a 319-residue protein sequence, read N- to C-terminus: Cytochrome c biogenesis protein CcsA (319 aa).

Helical transmembrane passes span 11-31, 34-54, 71-91, 97-117, 142-162, 227-247, 254-274, and 288-308; these read VNFAFGGLLTAMLVYWSSLAF, ISGLNKLAALITLLVNIALAL, LYESLLFLAWGLTFVHLFIES, LIGAVSIPVAMFVTAFASLAL, IMMISYSILILGSLLSILFLI, IIGLGFPLLTIGIVAGAVWAN, WSWDPKETWALITWLIFAAYL, and AILASVGFLVVWICYLGVNFL.

The protein belongs to the CcmF/CycK/Ccl1/NrfE/CcsA family. As to quaternary structure, may interact with Ccs1.

It localises to the plastid. Its subcellular location is the chloroplast thylakoid membrane. Its function is as follows. Required during biogenesis of c-type cytochromes (cytochrome c6 and cytochrome f) at the step of heme attachment. This is Cytochrome c biogenesis protein CcsA from Porphyra purpurea (Red seaweed).